A 373-amino-acid chain; its full sequence is Probable di-N-acetylchitobiase 1 (373 aa).

The signal sequence occupies residues 1–20 (MKIFIIISLILTILIIQSKS). Residues 21-369 (KECPCSNVEL…SGMWGALNSF (349 aa)) enclose the GH18 domain. A glycan (N-linked (GlcNAc...) asparagine) is linked at Asn48. Residues 53–54 (PY) and 82–85 (NGVR) contribute to the chitin site. Asn99 carries an N-linked (GlcNAc...) asparagine glycan. Residue Glu127 is the Proton donor of the active site. Residues Tyr128 and 191–194 (MDYD) contribute to the chitin site. N-linked (GlcNAc...) asparagine glycosylation is found at Asn222, Asn250, Asn269, Asn279, and Asn288. Trp347 lines the chitin pocket.

Belongs to the glycosyl hydrolase 18 family.

Its subcellular location is the lysosome. Involved in the degradation of asparagine-linked glycoproteins. May hydrolyze of N-acetyl-beta-D-glucosamine (1-4)N-acetylglucosamine chitobiose core from the reducing end of the bond. The chain is Probable di-N-acetylchitobiase 1 (ctbs1) from Dictyostelium discoideum (Social amoeba).